The chain runs to 233 residues: Homeobox protein not2 (233 aa).

The homeobox DNA-binding region spans 135 to 194; it reads LKRIRTVFTPEQLERLEKEFLKQQYMVGTERVDLASTLNLTETQVKVWFQNRRIKWRKQS. Residues 212–233 are disordered; sequence SSDHTDDSRETEEEEDDVDVEL. Residues 220-233 are compositionally biased toward acidic residues; that stretch reads RETEEEEDDVDVEL.

Localized to the dorsal lip of the blastopore (Spemann organizer) during early gastrulation, after which expression continues in tissues derived from the organizer. Expressed in the notochord during mid-gastrulation, the chordoneural hinge, notochord and ventral spinal cord of the tailbud at stage 22, and finally the tip of the tail in the tadpole (stage 35).

The protein resides in the nucleus. In terms of biological role, transcriptional repressor. Plays a fundamental role in notochord formation, acting within the mesodermal region. Acts downstream of gsc and upstream of chrd and foxa4-A/pintallavis. The chain is Homeobox protein not2 from Xenopus laevis (African clawed frog).